Consider the following 498-residue polypeptide: Bifunctional protein GlmU (498 aa).

The pyrophosphorylase stretch occupies residues Met1–Arg238. UDP-N-acetyl-alpha-D-glucosamine is bound by residues Leu9 to Gly12, Lys23, Gln80, and Gly85 to Thr86. Residue Asp111 coordinates Mg(2+). UDP-N-acetyl-alpha-D-glucosamine is bound by residues Gly148, Glu163, Asn178, and Asn236. Asn236 provides a ligand contact to Mg(2+). Residues Val239–Ala259 are linker. The N-acetyltransferase stretch occupies residues Gly260 to Glu498. 2 residues coordinate UDP-N-acetyl-alpha-D-glucosamine: Arg341 and Lys359. His371 acts as the Proton acceptor in catalysis. Tyr374 and Asn385 together coordinate UDP-N-acetyl-alpha-D-glucosamine. Acetyl-CoA contacts are provided by residues Ala388, Asn394–Tyr395, Ser413, and Ala431. A disordered region spans residues Ala470–Glu498.

The protein in the N-terminal section; belongs to the N-acetylglucosamine-1-phosphate uridyltransferase family. This sequence in the C-terminal section; belongs to the transferase hexapeptide repeat family. In terms of assembly, homotrimer. It depends on Mg(2+) as a cofactor.

It localises to the cytoplasm. The enzyme catalyses alpha-D-glucosamine 1-phosphate + acetyl-CoA = N-acetyl-alpha-D-glucosamine 1-phosphate + CoA + H(+). The catalysed reaction is N-acetyl-alpha-D-glucosamine 1-phosphate + UTP + H(+) = UDP-N-acetyl-alpha-D-glucosamine + diphosphate. It participates in nucleotide-sugar biosynthesis; UDP-N-acetyl-alpha-D-glucosamine biosynthesis; N-acetyl-alpha-D-glucosamine 1-phosphate from alpha-D-glucosamine 6-phosphate (route II): step 2/2. Its pathway is nucleotide-sugar biosynthesis; UDP-N-acetyl-alpha-D-glucosamine biosynthesis; UDP-N-acetyl-alpha-D-glucosamine from N-acetyl-alpha-D-glucosamine 1-phosphate: step 1/1. The protein operates within bacterial outer membrane biogenesis; LPS lipid A biosynthesis. Functionally, catalyzes the last two sequential reactions in the de novo biosynthetic pathway for UDP-N-acetylglucosamine (UDP-GlcNAc). The C-terminal domain catalyzes the transfer of acetyl group from acetyl coenzyme A to glucosamine-1-phosphate (GlcN-1-P) to produce N-acetylglucosamine-1-phosphate (GlcNAc-1-P), which is converted into UDP-GlcNAc by the transfer of uridine 5-monophosphate (from uridine 5-triphosphate), a reaction catalyzed by the N-terminal domain. The protein is Bifunctional protein GlmU of Mycolicibacterium gilvum (strain PYR-GCK) (Mycobacterium gilvum (strain PYR-GCK)).